The primary structure comprises 207 residues: Adenylyl-sulfate kinase (207 aa).

Residue 39-46 coordinates ATP; sequence GLSGAGKS. Serine 113 (phosphoserine intermediate) is an active-site residue.

The protein belongs to the APS kinase family.

It carries out the reaction adenosine 5'-phosphosulfate + ATP = 3'-phosphoadenylyl sulfate + ADP + H(+). It participates in sulfur metabolism; hydrogen sulfide biosynthesis; sulfite from sulfate: step 2/3. Catalyzes the synthesis of activated sulfate. This is Adenylyl-sulfate kinase from Vibrio vulnificus (strain CMCP6).